The sequence spans 165 residues: Histone H1-like protein HC2 (165 aa).

Basic residues-rich tracts occupy residues 1 to 50 and 59 to 80; these read MLGV…KTVA and PVAKKATAKKAPVRKVAAKKTV. Residues 1–80 are disordered; the sequence is MLGVQKKRST…VRKVAAKKTV (80 aa).

The protein belongs to the histone H1/H5 family. HCT subfamily.

Functionally, might have a role in establishing the nucleoid structure of elementary bodies. In Chlamydia trachomatis, this protein is Histone H1-like protein HC2 (hctB).